The sequence spans 135 residues: Retinol-binding protein 1 (135 aa).

Position 9 is an omega-N-methylarginine (W9). The tract at residues 22-32 is important for interaction with STRA6; sequence RALDVNVALRK. K41, M63, and Q109 together coordinate all-trans-retinol.

Belongs to the calycin superfamily. Fatty-acid binding protein (FABP) family. Interacts (only as retinol-free apoprotein) with STRA6. As to expression, detected in nearly all the tissues with higher expression in adult ovary, pancreas, pituitary gland and adrenal gland, and fetal liver.

Its subcellular location is the cytoplasm. It localises to the lipid droplet. Cytoplasmic retinol-binding protein. Accepts retinol from the transport protein STRA6, and thereby contributes to retinol uptake, storage and retinoid homeostasis. The polypeptide is Retinol-binding protein 1 (RBP1) (Homo sapiens (Human)).